Consider the following 373-residue polypeptide: Cobalt-precorrin-5B C(1)-methyltransferase (373 aa).

It belongs to the CbiD family.

The enzyme catalyses Co-precorrin-5B + S-adenosyl-L-methionine = Co-precorrin-6A + S-adenosyl-L-homocysteine. It participates in cofactor biosynthesis; adenosylcobalamin biosynthesis; cob(II)yrinate a,c-diamide from sirohydrochlorin (anaerobic route): step 6/10. Catalyzes the methylation of C-1 in cobalt-precorrin-5B to form cobalt-precorrin-6A. This Listeria monocytogenes serovar 1/2a (strain ATCC BAA-679 / EGD-e) protein is Cobalt-precorrin-5B C(1)-methyltransferase.